The sequence spans 227 residues: MKNILKVFNTMILALIIIIATFSNTANAADSGTLNYEVYKYNTNDTSIANDYFNKPAKYIKKNGKLYVQITVNHSHWITGMSIEGHKERIISKNTAKDERTSEFEVSKLNGKIDGKIDVYIDEKVNGKPFKYDHHYNITYKFNGPSDVAGANAPGKDDKNSASGSDKGSDGATTGQSESNSSNKDKVENPQTNAGTPAYIYAIPVASLALLIAITLFVRKKSKGNVE.

The N-terminal stretch at M1–A28 is a signal peptide. Positions A29–G150 constitute an NEAT domain. The heme site is built by S47, I48, Y132, and Y136. The tract at residues A149–Q191 is disordered. Residues S161 to A172 show a composition bias toward low complexity. Residues T173–S182 are compositionally biased toward polar residues. Positions N189–N193 match the NPQTN sorting signal motif. Residue T192 is modified to Pentaglycyl murein peptidoglycan amidated threonine. Residues N193–E227 constitute a propeptide, removed by sortase B.

The protein belongs to the IsdC family. In terms of assembly, monomer. Interacts with IsdA.

Its subcellular location is the secreted. The protein localises to the cell wall. Involved in heme (porphyrin) scavenging. Binds hemoglobin and almost exclusively free-base protoporphyrin IX. Probably has a role as the central conduit of the isd heme uptake system, i.e. mediates the transfer of the iron-containing nutrient from IsdABH to the membrane translocation system IsdDEF. Hemin-free IsdC (apo-IsdC) acquires hemin from hemin-containing IsdA (holo-IsdA) probably through the activated holo-IsdA-apo-IsdC complex and due to the higher affinity of apo-IsdC for the cofactor. The reaction is reversible. The chain is Iron-regulated surface determinant protein C (isdC) from Staphylococcus aureus (strain MRSA252).